The primary structure comprises 160 residues: Large ribosomal subunit protein uL22c (160 aa).

Belongs to the universal ribosomal protein uL22 family. In terms of assembly, part of the 50S ribosomal subunit.

It localises to the plastid. The protein resides in the chloroplast. Functionally, this protein binds specifically to 23S rRNA. In terms of biological role, the globular domain of the protein is located near the polypeptide exit tunnel on the outside of the subunit, while an extended beta-hairpin is found that lines the wall of the exit tunnel in the center of the 70S ribosome. The sequence is that of Large ribosomal subunit protein uL22c (rpl22) from Lepidium virginicum (Virginia pepperweed).